The following is a 215-amino-acid chain: Protein Ac34 (215 aa).

In terms of assembly, interacts with host proteins P40, P34 ands P20.

The protein resides in the host nucleus. Functionally, plays a role in the translocation of the P40 subunit of host Arp2/3 to the nucleus. The robust nuclear accumulation of Arp2/3 induces nuclear actin polymerization to assist in virus replication. Mechanistically, subverts the host CRM1-dependent nuclear export pathway leading to Arp2/3 acumulation in the host nucleus. This Autographa californica nuclear polyhedrosis virus (AcMNPV) protein is Protein Ac34 (Ac34).